Reading from the N-terminus, the 342-residue chain is Replication factor C subunit 4 (342 aa).

ATP contacts are provided by residues V24, V36, 61–68, N157, and R215; that span reads GMPGIGKT.

The protein belongs to the activator 1 small subunits family. In terms of assembly, heteropentamer of subunits rfc1, rfc2, rfc3, rfc4 and rfc5 that forms a complex (RFC) with PCNA in the presence of ATP. Two other complexes exist where rfc1 can be replaced by either ctf18 or elg1 to form the ctf18-RFC or the elg1-RFC complexes respectively.

Its subcellular location is the nucleus. The elongation of primed DNA templates by DNA polymerase delta and epsilon requires the action of the accessory proteins PCNA and activator 1. The protein is Replication factor C subunit 4 (rfc4) of Schizosaccharomyces pombe (strain 972 / ATCC 24843) (Fission yeast).